The sequence spans 181 residues: 3-hydroxyacyl-[acyl-carrier-protein] dehydratase FabZ (181 aa).

Residue H54 is part of the active site.

It belongs to the thioester dehydratase family. FabZ subfamily.

It localises to the cytoplasm. It catalyses the reaction a (3R)-hydroxyacyl-[ACP] = a (2E)-enoyl-[ACP] + H2O. Functionally, involved in unsaturated fatty acids biosynthesis. Catalyzes the dehydration of short chain beta-hydroxyacyl-ACPs and long chain saturated and unsaturated beta-hydroxyacyl-ACPs. In Yersinia pestis, this protein is 3-hydroxyacyl-[acyl-carrier-protein] dehydratase FabZ.